The primary structure comprises 669 residues: Beta-galactosidase (669 aa).

A signal peptide spans 1 to 24; it reads MDFPGAARLLSLLLVPLLLGPARG. The propeptide occupies 25 to 29; it reads LRNAS. A glycan (N-linked (GlcNAc...) asparagine) is linked at Asn27. The substrate site is built by Tyr84, Glu130, and Asn188. Glu189 functions as the Proton donor in the catalytic mechanism. Cysteines 196 and 231 form a disulfide. N-linked (GlcNAc...) asparagine glycosylation occurs at Asn248. Glu269 acts as the Nucleophile in catalysis. Tyr334 provides a ligand contact to substrate. Residues Asn465, Asn499, Asn547, and Asn557 are each glycosylated (N-linked (GlcNAc...) asparagine). A disulfide bridge connects residues Cys628 and Cys636. A disordered region spans residues 649–669; the sequence is TPTSSHPLPDLSDRDSGWDRV. The span at 659-669 shows a compositional bias: basic and acidic residues; that stretch reads LSDRDSGWDRV.

Belongs to the glycosyl hydrolase 35 family. In terms of assembly, homodimer. May form higher multimers.

The protein localises to the lysosome. It carries out the reaction Hydrolysis of terminal non-reducing beta-D-galactose residues in beta-D-galactosides.. Its function is as follows. Cleaves beta-linked terminal galactosyl residues from gangliosides, glycoproteins, and glycosaminoglycans. This is Beta-galactosidase (GLB1) from Felis catus (Cat).